The following is a 212-amino-acid chain: Large ribosomal subunit protein bL25 (212 aa).

Residues 179–212 (EPEEEELPEDDEAAAEGEDAAAGEEAEAPAESED) form a disordered region.

This sequence belongs to the bacterial ribosomal protein bL25 family. CTC subfamily. As to quaternary structure, part of the 50S ribosomal subunit; part of the 5S rRNA/L5/L18/L25 subcomplex. Contacts the 5S rRNA. Binds to the 5S rRNA independently of L5 and L18.

Its function is as follows. This is one of the proteins that binds to the 5S RNA in the ribosome where it forms part of the central protuberance. In Corynebacterium urealyticum (strain ATCC 43042 / DSM 7109), this protein is Large ribosomal subunit protein bL25.